Here is a 238-residue protein sequence, read N- to C-terminus: DNA repair protein RecO (238 aa).

Belongs to the RecO family.

In terms of biological role, involved in DNA repair and RecF pathway recombination. The protein is DNA repair protein RecO of Hahella chejuensis (strain KCTC 2396).